A 389-amino-acid chain; its full sequence is Probable dual-specificity RNA methyltransferase RlmN (389 aa).

The active-site Proton acceptor is glutamate 114. The Radical SAM core domain occupies 120–358 (QHYGLSVCVT…CVVRQEHGTD (239 aa)). A disulfide bond links cysteine 127 and cysteine 363. 3 residues coordinate [4Fe-4S] cluster: cysteine 134, cysteine 138, and cysteine 141. S-adenosyl-L-methionine is bound by residues 186–187 (GE), serine 218, 241–243 (SLH), and asparagine 319. Cysteine 363 serves as the catalytic S-methylcysteine intermediate. The interval 370–389 (TMKRDRQKAVAEASGKSEGK) is disordered. Residues 371–389 (MKRDRQKAVAEASGKSEGK) show a composition bias toward basic and acidic residues.

The protein belongs to the radical SAM superfamily. RlmN family. [4Fe-4S] cluster serves as cofactor.

Its subcellular location is the cytoplasm. It catalyses the reaction adenosine(2503) in 23S rRNA + 2 reduced [2Fe-2S]-[ferredoxin] + 2 S-adenosyl-L-methionine = 2-methyladenosine(2503) in 23S rRNA + 5'-deoxyadenosine + L-methionine + 2 oxidized [2Fe-2S]-[ferredoxin] + S-adenosyl-L-homocysteine. It carries out the reaction adenosine(37) in tRNA + 2 reduced [2Fe-2S]-[ferredoxin] + 2 S-adenosyl-L-methionine = 2-methyladenosine(37) in tRNA + 5'-deoxyadenosine + L-methionine + 2 oxidized [2Fe-2S]-[ferredoxin] + S-adenosyl-L-homocysteine. In terms of biological role, specifically methylates position 2 of adenine 2503 in 23S rRNA and position 2 of adenine 37 in tRNAs. This Streptococcus thermophilus (strain CNRZ 1066) protein is Probable dual-specificity RNA methyltransferase RlmN.